Here is a 447-residue protein sequence, read N- to C-terminus: Na(+)-translocating NADH-quinone reductase subunit A (447 aa).

It belongs to the NqrA family. Composed of six subunits; NqrA, NqrB, NqrC, NqrD, NqrE and NqrF.

The enzyme catalyses a ubiquinone + n Na(+)(in) + NADH + H(+) = a ubiquinol + n Na(+)(out) + NAD(+). Its function is as follows. NQR complex catalyzes the reduction of ubiquinone-1 to ubiquinol by two successive reactions, coupled with the transport of Na(+) ions from the cytoplasm to the periplasm. NqrA to NqrE are probably involved in the second step, the conversion of ubisemiquinone to ubiquinol. The polypeptide is Na(+)-translocating NADH-quinone reductase subunit A (Haemophilus influenzae (strain ATCC 51907 / DSM 11121 / KW20 / Rd)).